The following is a 329-amino-acid chain: Malate dehydrogenase 2 (329 aa).

12–18 (GAAGQIA) is an NAD(+) binding site. The substrate site is built by R93 and R99. NAD(+)-binding positions include N106, Q113, and 130 to 132 (VGN). The substrate site is built by N132 and R163. H188 serves as the catalytic Proton acceptor.

The protein belongs to the LDH/MDH superfamily. MDH type 2 family.

It catalyses the reaction (S)-malate + NAD(+) = oxaloacetate + NADH + H(+). In terms of biological role, catalyzes the reversible oxidation of malate to oxaloacetate. The protein is Malate dehydrogenase 2 of Burkholderia thailandensis (strain ATCC 700388 / DSM 13276 / CCUG 48851 / CIP 106301 / E264).